Consider the following 1379-residue polypeptide: DNA-directed RNA polymerase subunit beta (1379 aa).

The protein belongs to the RNA polymerase beta chain family. In terms of assembly, the RNAP catalytic core consists of 2 alpha, 1 beta, 1 beta' and 1 omega subunit. When a sigma factor is associated with the core the holoenzyme is formed, which can initiate transcription.

It carries out the reaction RNA(n) + a ribonucleoside 5'-triphosphate = RNA(n+1) + diphosphate. DNA-dependent RNA polymerase catalyzes the transcription of DNA into RNA using the four ribonucleoside triphosphates as substrates. This is DNA-directed RNA polymerase subunit beta from Rhizobium johnstonii (strain DSM 114642 / LMG 32736 / 3841) (Rhizobium leguminosarum bv. viciae).